Consider the following 351-residue polypeptide: Protein-glutamate methylesterase/protein-glutamine glutaminase 1 (351 aa).

Positions 1–115 (MVDDSAVVRQ…KQFLTESADE (115 aa)) constitute a Response regulatory domain. Aspartate 49 is modified (4-aspartylphosphate). One can recognise a CheB-type methylesterase domain in the interval 161–351 (AQTTERIVAI…MAREIVTQLQ (191 aa)). Active-site residues include serine 173, histidine 199, and aspartate 295.

The protein belongs to the CheB family. In terms of processing, phosphorylated by CheA. Phosphorylation of the N-terminal regulatory domain activates the methylesterase activity.

It is found in the cytoplasm. It carries out the reaction [protein]-L-glutamate 5-O-methyl ester + H2O = L-glutamyl-[protein] + methanol + H(+). The catalysed reaction is L-glutaminyl-[protein] + H2O = L-glutamyl-[protein] + NH4(+). Functionally, involved in chemotaxis. Part of a chemotaxis signal transduction system that modulates chemotaxis in response to various stimuli. Catalyzes the demethylation of specific methylglutamate residues introduced into the chemoreceptors (methyl-accepting chemotaxis proteins or MCP) by CheR. Also mediates the irreversible deamidation of specific glutamine residues to glutamic acid. The protein is Protein-glutamate methylesterase/protein-glutamine glutaminase 1 of Xanthomonas oryzae pv. oryzae (strain MAFF 311018).